The primary structure comprises 181 residues: Probable GTP-binding protein EngB (181 aa).

Positions 18 to 181 (PKNEICFVGR…LQDLVNNLFN (164 aa)) constitute an EngB-type G domain. Residues 26–33 (GRSNVGKS), 52–56 (GKTKL), 70–73 (DLPG), 137–140 (TKRD), and 164–166 (VSI) each bind GTP. Residues Ser-33 and Thr-54 each coordinate Mg(2+).

It belongs to the TRAFAC class TrmE-Era-EngA-EngB-Septin-like GTPase superfamily. EngB GTPase family. The cofactor is Mg(2+).

Functionally, necessary for normal cell division and for the maintenance of normal septation. This is Probable GTP-binding protein EngB from Mycoplasma mobile (strain ATCC 43663 / 163K / NCTC 11711) (Mesomycoplasma mobile).